Consider the following 108-residue polypeptide: Integration host factor subunit alpha (108 aa).

This sequence belongs to the bacterial histone-like protein family. Heterodimer of an alpha and a beta chain.

This protein is one of the two subunits of integration host factor, a specific DNA-binding protein that functions in genetic recombination as well as in transcriptional and translational control. This is Integration host factor subunit alpha from Rhodopseudomonas palustris (strain BisB18).